Here is a 397-residue protein sequence, read N- to C-terminus: Proteinase-activated receptor 2 (397 aa).

The first 25 residues, 1–25, serve as a signal peptide directing secretion; that stretch reads MRSLSLAWLLGGITLLAASASCNRT. N-linked (GlcNAc...) asparagine glycosylation occurs at N23. Residues 26 to 36 constitute a propeptide, removed for receptor activation; sequence VNAPGPNSKGR. Residues 37–71 lie on the Extracellular side of the membrane; it reads SLIGRLDTPPPITGKGAPVEPGFSVDEFSASVLTG. The helical transmembrane segment at 72–101 threads the bilayer; the sequence is KLTTVFLPVIYIIVFVIGLPSNGMALWVFF. Residues 102–108 lie on the Cytoplasmic side of the membrane; the sequence is FRTKKKH. A helical transmembrane segment spans residues 109–137; sequence PAVIYMANLALADLLSVIWFPLKISYHLH. At 138 to 149 the chain is on the extracellular side; it reads GNDWTYGDALCK. C148 and C226 are disulfide-bonded. Residues 150-177 traverse the membrane as a helical segment; it reads VLIGFFYGNMYCSILFMTCLSVQRYWVI. Residues 178 to 183 lie on the Cytoplasmic side of the membrane; that stretch reads VNPMGH. Residues 184–211 form a helical membrane-spanning segment; sequence SRKRANIAVGVSLAIWLLIFLVTIPLYV. Residues 212 to 235 lie on the Extracellular side of the membrane; the sequence is MRQTIYIPALNITTCHDVLPEEVL. N222 is a glycosylation site (N-linked (GlcNAc...) asparagine). Residues 236–269 form a helical membrane-spanning segment; sequence VGDMFSYFLSLAIGVFLFPALLTASAYVLMIKTL. The Cytoplasmic segment spans residues 270–277; it reads RSSAMDEH. Residues 278 to 317 form a helical membrane-spanning segment; the sequence is SEKKRRRAIRLIITVLSMYFICFAPSNVLLVVHYFLIKSQ. Over 318 to 323 the chain is Extracellular; it reads RQSHVY. A helical transmembrane segment spans residues 324 to 347; it reads ALYLVALCLSTLNSCIDPFVYYFV. Residues 348–397 are Cytoplasmic-facing; it reads SKDFRDQARNALLCRSVRTVKRMQISLTSNKFSRKSSSYSSSSTSVKTSY. Residue C361 is the site of S-palmitoyl cysteine attachment.

This sequence belongs to the G-protein coupled receptor 1 family. Interacts with TLR4, COPS5 and TMED2. Interacts with GNAQ, GNA11, GNA12, GNA13 and GNA14. In terms of processing, a proteolytic cleavage generates a new N-terminus that functions as a tethered ligand. Activating serine proteases include trypsin, mast cell tryptase, coagulation factors VII and Xa, myeloblastin/PRTN3 and membrane-type serine protease 1/ST14. Proposed subsequent cleavage by serine proteases is leading to receptor deactivation and include neutrophil elastase and cathepsin G. At least in part, implicated proteases are also shown to activate the receptor; the glycosylation status of the receptor is thought to contribute to the difference. Post-translationally, N-glycosylated and sialylated. Multiple phosphorylated on serine and threonine residues in the cytoplasmic region upon receptor activation; required for receptor desensitization and recruitment of beta-arrestin. In terms of processing, monoubiquitinated by Cbl at the plasma membrane and in early endosomes; not required for receptor endocytosis but for translocation to late endosomes or lysosomes. Deubiquitination involves Stambp and Usp8; required for lysosomal trafficking and receptor degradation.

Its subcellular location is the cell membrane. Receptor for trypsin and trypsin-like enzymes coupled to G proteins. Its function is mediated through the activation of several signaling pathways including phospholipase C (PLC), intracellular calcium, mitogen-activated protein kinase (MAPK), I-kappaB kinase/NF-kappaB and Rho. Can also be transactivated by cleaved F2R/PAR1. Involved in modulation of inflammatory responses and regulation of innate and adaptive immunity, and acts as a sensor for proteolytic enzymes generated during infection. Generally is promoting inflammation. Can signal synergistically with TLR4 and probably TLR2 in inflammatory responses and modulates Tlr3 signaling. Has a protective role in establishing the endothelial barrier; the activity involves coagulation factor X. Regulates endothelial cell barrier integrity during neutrophil extravasation, probably following proteolytic cleavage by PRTN3. Proposed to have a bronchoprotective role in airway epithelium, but also shown to compromise the airway epithelial barrier by interrupting E-cadherin adhesion. Involved in the regulation of vascular tone; activation results in hypotension presumably mediated by vasodilation. Associates with a subset of G proteins alpha subunits such as GNAQ, GNA11, GNA14, GNA12 and GNA13, but probably not with G(o)-alpha, G(i) subunit alpha-1 and G(i) subunit alpha-2. Believed to be a class B receptor which internalizes as a complex with arrestin and traffic with it to endosomal vesicles, presumably as desensitized receptor, for extended periods of time. Mediates inhibition of TNF-alpha stimulated JNK phosphorylation via coupling to G GNAQ and GNA11; the function involves dissociation of RIPK1 and Tradd from TNFR1. Mediates phosphorylation of nuclear factor NF-kappa-B RELA subunit at 'Ser-536'; the function involves Ikbkb and is predominantly independent of G proteins. Involved in cellular migration. Involved in cytoskeletal rearrangement and chemotaxis through beta-arrestin-promoted scaffolds; the function is independent of GNAQ and GNA11 and involves promotion of cofilin dephosphorylation and actin filament severing. Induces redistribution of COPS5 from the plasma membrane to the cytosol and activation of the JNK cascade is mediated by Cops5. Involved in the recruitment of leukocytes to the sites of inflammation and is the major PAR receptor capable of modulating eosinophil function such as pro-inflammatory cytokine secretion, superoxide production and degranulation. During inflammation promotes dendritic cell maturation, trafficking to the lymph nodes and subsequent T-cell activation. Involved in antimicrobial response of innate immune cells; activation enhances phagocytosis of Gram-positive and killing of Gram-negative bacteria. Acts synergistically with interferon-gamma in enhancing antiviral responses. Probably mediates activation of pro-inflammatory and pro-fibrotic responses in fibroblasts, triggered by coagulation factor Xa (F10). Probably mediates activation of barrier protective signaling responses in endothelial cells, triggered by coagulation factor Xa (F10). The chain is Proteinase-activated receptor 2 (F2rl1) from Rattus norvegicus (Rat).